A 900-amino-acid chain; its full sequence is DNA mismatch repair protein MutS (900 aa).

The disordered stretch occupies residues M1–D88. Over residues A56–N68 the composition is skewed to basic and acidic residues. Residue G714–S721 participates in ATP binding.

The protein belongs to the DNA mismatch repair MutS family.

Its function is as follows. This protein is involved in the repair of mismatches in DNA. It is possible that it carries out the mismatch recognition step. This protein has a weak ATPase activity. The protein is DNA mismatch repair protein MutS of Parasynechococcus marenigrum (strain WH8102).